The chain runs to 405 residues: Deoxyguanosinetriphosphate triphosphohydrolase-like protein (405 aa).

Positions 75–219 (RLTHTIEVAQ…AAIADDIAYN (145 aa)) constitute an HD domain.

It belongs to the dGTPase family. Type 2 subfamily.

This is Deoxyguanosinetriphosphate triphosphohydrolase-like protein from Rhizobium johnstonii (strain DSM 114642 / LMG 32736 / 3841) (Rhizobium leguminosarum bv. viciae).